Consider the following 270-residue polypeptide: Putative postmeiotic segregation increased 2-like protein 11 (270 aa).

The protein belongs to the DNA mismatch repair MutL/HexB family.

This chain is Putative postmeiotic segregation increased 2-like protein 11 (PMS2P11), found in Homo sapiens (Human).